We begin with the raw amino-acid sequence, 310 residues long: Acetylglutamate kinase (310 aa).

Substrate-binding positions include 83-84 (GG), Arg105, and Asn207.

This sequence belongs to the acetylglutamate kinase family. ArgB subfamily.

It localises to the cytoplasm. It carries out the reaction N-acetyl-L-glutamate + ATP = N-acetyl-L-glutamyl 5-phosphate + ADP. The protein operates within amino-acid biosynthesis; L-arginine biosynthesis; N(2)-acetyl-L-ornithine from L-glutamate: step 2/4. Functionally, catalyzes the ATP-dependent phosphorylation of N-acetyl-L-glutamate. The polypeptide is Acetylglutamate kinase (Ralstonia nicotianae (strain ATCC BAA-1114 / GMI1000) (Ralstonia solanacearum)).